The sequence spans 142 residues: Large ribosomal subunit protein uL13 (142 aa).

Belongs to the universal ribosomal protein uL13 family. In terms of assembly, part of the 50S ribosomal subunit.

In terms of biological role, this protein is one of the early assembly proteins of the 50S ribosomal subunit, although it is not seen to bind rRNA by itself. It is important during the early stages of 50S assembly. This chain is Large ribosomal subunit protein uL13, found in Acidovorax sp. (strain JS42).